Consider the following 185-residue polypeptide: Isopentenyl-diphosphate Delta-isomerase (185 aa).

Mn(2+)-binding residues include His-27 and His-34. In terms of domain architecture, Nudix hydrolase spans 32 to 168; it reads PLHLAFSCHL…PWAFSPWLTL (137 aa). Residue Cys-69 is part of the active site. Mg(2+) is bound at residue Cys-69. His-71 is a Mn(2+) binding site. Glu-89 contributes to the Mg(2+) binding site. Mn(2+) contacts are provided by Glu-118 and Glu-120. Glu-120 is a catalytic residue.

The protein belongs to the IPP isomerase type 1 family. Mg(2+) is required as a cofactor. Requires Mn(2+) as cofactor.

The protein resides in the cytoplasm. The enzyme catalyses isopentenyl diphosphate = dimethylallyl diphosphate. It participates in isoprenoid biosynthesis; dimethylallyl diphosphate biosynthesis; dimethylallyl diphosphate from isopentenyl diphosphate: step 1/1. In terms of biological role, catalyzes the 1,3-allylic rearrangement of the homoallylic substrate isopentenyl (IPP) to its highly electrophilic allylic isomer, dimethylallyl diphosphate (DMAPP). This chain is Isopentenyl-diphosphate Delta-isomerase, found in Leifsonia xyli subsp. xyli (strain CTCB07).